The sequence spans 86 residues: FVNKHLCGSHLVDALYLVCGDRGFFYTPMAXXELEDPQVGQADPGVVPEAGRLQPLALEMTLQXXGIVDQCCTSICTLYQLENYCN.

3 disulfides stabilise this stretch: Cys-7–Cys-72, Cys-19–Cys-85, and Cys-71–Cys-76. The propeptide at 33-63 (ELEDPQVGQADPGVVPEAGRLQPLALEMTLQ) is c peptide.

The protein belongs to the insulin family. As to quaternary structure, heterodimer of a B chain and an A chain linked by two disulfide bonds.

Its subcellular location is the secreted. Its function is as follows. Insulin decreases blood glucose concentration. It increases cell permeability to monosaccharides, amino acids and fatty acids. It accelerates glycolysis, the pentose phosphate cycle, and glycogen synthesis in liver. The polypeptide is Insulin (INS) (Chinchilla chinchilla (Short-tailed chinchilla)).